A 130-amino-acid chain; its full sequence is Small ribosomal subunit protein uS9 (130 aa).

It belongs to the universal ribosomal protein uS9 family.

This chain is Small ribosomal subunit protein uS9, found in Yersinia enterocolitica serotype O:8 / biotype 1B (strain NCTC 13174 / 8081).